Here is a 639-residue protein sequence, read N- to C-terminus: Mediator of RNA polymerase II transcription subunit 17 (639 aa).

Residues 160 to 187 (RLQNFNAAADKLLKSASRLENEVASETR) adopt a coiled-coil conformation.

The protein belongs to the Mediator complex subunit 17 family. As to quaternary structure, component of the Mediator complex.

It is found in the nucleus. Component of the Mediator complex, a coactivator involved in the regulated transcription of nearly all RNA polymerase II-dependent genes. Mediator functions as a bridge to convey information from gene-specific regulatory proteins to the basal RNA polymerase II transcription machinery. Mediator is recruited to promoters by direct interactions with regulatory proteins and serves as a scaffold for the assembly of a functional preinitiation complex with RNA polymerase II and the general transcription factors. The sequence is that of Mediator of RNA polymerase II transcription subunit 17 (srb4) from Neosartorya fischeri (strain ATCC 1020 / DSM 3700 / CBS 544.65 / FGSC A1164 / JCM 1740 / NRRL 181 / WB 181) (Aspergillus fischerianus).